A 737-amino-acid chain; its full sequence is Polyribonucleotide nucleotidyltransferase (737 aa).

Mg(2+)-binding residues include aspartate 489 and aspartate 495. In terms of domain architecture, KH spans 556 to 615 (PKIDTIKIDVDKIKIVIGKGGETIDKIIAETGVKIDIDEEGNVSIYSSDQDAINRAKEII). One can recognise an S1 motif domain in the interval 625–693 (DEVYRAKVVR…EKGRIDASMK (69 aa)). The tract at residues 691–737 (SMKALLPRPPKPEHDEKGEKSERPHRPRHHKDHKPKKEFTETPKDSE) is disordered. The span at 700–714 (PKPEHDEKGEKSERP) shows a compositional bias: basic and acidic residues. Residues 715 to 724 (HRPRHHKDHK) show a composition bias toward basic residues. A compositionally biased stretch (basic and acidic residues) spans 725-737 (PKKEFTETPKDSE).

The protein belongs to the polyribonucleotide nucleotidyltransferase family. Requires Mg(2+) as cofactor.

It is found in the cytoplasm. The catalysed reaction is RNA(n+1) + phosphate = RNA(n) + a ribonucleoside 5'-diphosphate. In terms of biological role, involved in mRNA degradation. Catalyzes the phosphorolysis of single-stranded polyribonucleotides processively in the 3'- to 5'-direction. This chain is Polyribonucleotide nucleotidyltransferase, found in Streptococcus pneumoniae serotype 19F (strain G54).